Consider the following 511-residue polypeptide: Maturase K (511 aa).

It belongs to the intron maturase 2 family. MatK subfamily.

The protein localises to the plastid. It is found in the chloroplast. In terms of biological role, usually encoded in the trnK tRNA gene intron. Probably assists in splicing its own and other chloroplast group II introns. This is Maturase K from Acorus calamus var. americanus (American sweet flag).